The chain runs to 189 residues: Flavin prenyltransferase UbiX (189 aa).

Residues 10-12, Ser36, 91-94, and Arg126 contribute to the FMN site; these read GAS and STNT. Dimethylallyl phosphate contacts are provided by Tyr156 and Lys172.

Belongs to the UbiX/PAD1 family.

The enzyme catalyses dimethylallyl phosphate + FMNH2 = prenylated FMNH2 + phosphate. Flavin prenyltransferase that catalyzes the synthesis of the prenylated FMN cofactor (prenyl-FMN) for 4-hydroxy-3-polyprenylbenzoic acid decarboxylase UbiD. The prenyltransferase is metal-independent and links a dimethylallyl moiety from dimethylallyl monophosphate (DMAP) to the flavin N5 and C6 atoms of FMN. The polypeptide is Flavin prenyltransferase UbiX (Aquifex aeolicus (strain VF5)).